The primary structure comprises 450 residues: Probable ECA polymerase (450 aa).

The next 11 helical transmembrane spans lie at 6-26 (FSGL…LTWF), 37-57 (VFFS…TSVL), 63-83 (VGVA…CFYA), 118-138 (VILM…NGFL), 155-175 (GVAL…VYFL), 181-201 (AWLF…MIVG), 207-227 (IIIA…ISLW), 228-248 (MLAA…LKRY), 341-361 (LVVM…GLII), 378-398 (YKAA…IVLA), and 410-430 (VFFI…YWLF).

The protein belongs to the WzyE family. Probably part of a complex composed of WzxE, WzyE and WzzE.

The protein localises to the cell inner membrane. The protein operates within bacterial outer membrane biogenesis; enterobacterial common antigen biosynthesis. Probably involved in the polymerization of enterobacterial common antigen (ECA) trisaccharide repeat units. This Escherichia coli O7:K1 (strain IAI39 / ExPEC) protein is Probable ECA polymerase.